The primary structure comprises 179 residues: MAFLASGAYLTHRQKVLRLYKRALRHLESWCVQRDKYRYFACLMRARFEEHKNEKDMVRATQLLKEAEEEFWYRQHPQPYIFPDSPGGTSYERYDCYKVPEWCLDDWHPSEKAMYPDYFAKREQWKKLQRESWEREVKQLQEETPPGGPLTEALPPARKEGDLPPLWWYIVTRPRERPM.

A2 carries the N-acetylalanine modification. S85 carries the phosphoserine modification. The tract at residues E136 to D162 is disordered.

It belongs to the complex I LYR family. As to quaternary structure, mammalian complex I is composed of 45 different subunits.

It localises to the mitochondrion inner membrane. Accessory subunit of the mitochondrial membrane respiratory chain NADH dehydrogenase (Complex I), that is believed to be not involved in catalysis. Complex I functions in the transfer of electrons from NADH to the respiratory chain. The immediate electron acceptor for the enzyme is believed to be ubiquinone. In Pongo abelii (Sumatran orangutan), this protein is NADH dehydrogenase [ubiquinone] 1 beta subcomplex subunit 9 (NDUFB9).